The primary structure comprises 135 residues: Phosphomevalonate dehydratase small subunit (135 aa).

Ser-67 (proton acceptor) is an active-site residue.

This sequence belongs to the AcnX type II small subunit family. Heterodimer composed of a large subunit (PMDh-L) and a small subunit (PMDh-S).

It catalyses the reaction (R)-5-phosphomevalonate = (2E)-3-methyl-5-phosphooxypent-2-enoate + H2O. The protein operates within isoprenoid biosynthesis; isopentenyl diphosphate biosynthesis via mevalonate pathway. In terms of biological role, component of a hydro-lyase that catalyzes the dehydration of mevalonate 5-phosphate (MVA5P) to form trans-anhydromevalonate 5-phosphate (tAHMP). Involved in the archaeal mevalonate (MVA) pathway, which provides fundamental precursors for isoprenoid biosynthesis, such as isopentenyl diphosphate (IPP) and dimethylallyl diphosphate (DMAPP). In Methanopyrus kandleri (strain AV19 / DSM 6324 / JCM 9639 / NBRC 100938), this protein is Phosphomevalonate dehydratase small subunit.